Here is a 262-residue protein sequence, read N- to C-terminus: Homeobox protein Nkx-6.3 (262 aa).

Residues 140-199 (KKHTRPTFTGHQIFALEKTFEQTKYLAGPERARLAYSLGMTESQVKVWFQNRRTKWRKKS) constitute a DNA-binding region (homeobox). The disordered stretch occupies residues 197 to 237 (KKSALEPSSSTPRAPGGASGDRAASENEDDEYNKPLDPDSD).

Expressed in the developing CNS and gastro-intestinal tract.

It localises to the nucleus. In terms of biological role, putative transcription factor, which may be involved in patterning of central nervous system and pancreas. This Mus musculus (Mouse) protein is Homeobox protein Nkx-6.3 (Nkx6-3).